The chain runs to 344 residues: UDP-3-O-acylglucosamine N-acyltransferase (344 aa).

Residue histidine 248 is the Proton acceptor of the active site.

It belongs to the transferase hexapeptide repeat family. LpxD subfamily. As to quaternary structure, homotrimer.

The enzyme catalyses a UDP-3-O-[(3R)-3-hydroxyacyl]-alpha-D-glucosamine + a (3R)-hydroxyacyl-[ACP] = a UDP-2-N,3-O-bis[(3R)-3-hydroxyacyl]-alpha-D-glucosamine + holo-[ACP] + H(+). It participates in bacterial outer membrane biogenesis; LPS lipid A biosynthesis. Its function is as follows. Catalyzes the N-acylation of UDP-3-O-acylglucosamine using 3-hydroxyacyl-ACP as the acyl donor. Is involved in the biosynthesis of lipid A, a phosphorylated glycolipid that anchors the lipopolysaccharide to the outer membrane of the cell. The protein is UDP-3-O-acylglucosamine N-acyltransferase of Prochlorococcus marinus (strain MIT 9312).